Reading from the N-terminus, the 351-residue chain is Putative aryl-alcohol dehydrogenase C977.14c (351 aa).

Residue serine 113 is modified to Phosphoserine.

This sequence belongs to the aldo/keto reductase family. Aldo/keto reductase 2 subfamily.

The protein localises to the cytoplasm. The protein resides in the nucleus. The polypeptide is Putative aryl-alcohol dehydrogenase C977.14c (Schizosaccharomyces pombe (strain 972 / ATCC 24843) (Fission yeast)).